We begin with the raw amino-acid sequence, 576 residues long: Cyclic nucleotide-binding domain-containing protein 2 (576 aa).

A nucleoside 3',5'-cyclic phosphate is bound at residue 116–239 (SYRNYAEPLQ…DAQYRFEFFR (124 aa)).

It is found in the cytoplasm. It localises to the cytosol. Essential for male fertility. Plays an important role in spermatogenesis and regulates sperm motility by controlling the development of the flagellar bending of sperm. In Homo sapiens (Human), this protein is Cyclic nucleotide-binding domain-containing protein 2 (CNBD2).